The sequence spans 486 residues: NADH-quinone oxidoreductase subunit N (486 aa).

Helical transmembrane passes span 14-34, 45-65, 77-97, 105-125, 130-150, 163-183, 203-223, 237-257, 268-288, 299-319, 326-346, 377-397, 409-429, and 459-479; these read SIAPMMVLSLFAVFILVLNFI, MLAILGLAINIFFLFGYSGIV, FAFISMIIILLFSILFLPLTL, CSLAEFYALYLFMIVGYEFMV, LIVILVGLETSSLALYTLIAL, YFTMGALSTGFFCFAIVIFYL, ILIATACIFLICSIGFKLSLI, SEVMAGYISIVPKIAGFIVAM, IAFIQISLYIIAVLTMTLANI, MLAFSSISHAGFVLCAVVIGT, LFLYWLMFSFANLGAFSVLWF, FLMALFMISLAGIPPFSVFWG, GFIFMAVIMAINSAIAVYYYL, and FIITFSAILCILAPFMVKFWT.

It belongs to the complex I subunit 2 family. In terms of assembly, NDH-1 is composed of 14 different subunits. Subunits NuoA, H, J, K, L, M, N constitute the membrane sector of the complex.

The protein localises to the cell inner membrane. It catalyses the reaction a quinone + NADH + 5 H(+)(in) = a quinol + NAD(+) + 4 H(+)(out). NDH-1 shuttles electrons from NADH, via FMN and iron-sulfur (Fe-S) centers, to quinones in the respiratory chain. The immediate electron acceptor for the enzyme in this species is believed to be ubiquinone. Couples the redox reaction to proton translocation (for every two electrons transferred, four hydrogen ions are translocated across the cytoplasmic membrane), and thus conserves the redox energy in a proton gradient. The sequence is that of NADH-quinone oxidoreductase subunit N from Campylobacter hominis (strain ATCC BAA-381 / DSM 21671 / CCUG 45161 / LMG 19568 / NCTC 13146 / CH001A).